A 203-amino-acid chain; its full sequence is Probable GTP-binding protein EngB (203 aa).

The 174-residue stretch at 22-195 (GIPEIALAGR…WEEIVNQYNQ (174 aa)) folds into the EngB-type G domain. GTP-binding positions include 30 to 37 (GRSNVGKS), 57 to 61 (GKTRT), 75 to 78 (DLPG), 142 to 145 (TKAD), and 174 to 176 (VSS). 2 residues coordinate Mg(2+): S37 and T59.

It belongs to the TRAFAC class TrmE-Era-EngA-EngB-Septin-like GTPase superfamily. EngB GTPase family. Mg(2+) serves as cofactor.

Its function is as follows. Necessary for normal cell division and for the maintenance of normal septation. The chain is Probable GTP-binding protein EngB from Clostridioides difficile (strain 630) (Peptoclostridium difficile).